A 63-amino-acid polypeptide reads, in one-letter code: Large ribosomal subunit protein uL29 (63 aa).

It belongs to the universal ribosomal protein uL29 family.

This is Large ribosomal subunit protein uL29 from Azotobacter vinelandii (strain DJ / ATCC BAA-1303).